The primary structure comprises 124 residues: Large ribosomal subunit protein bL12 (124 aa).

The protein belongs to the bacterial ribosomal protein bL12 family. As to quaternary structure, homodimer. Part of the ribosomal stalk of the 50S ribosomal subunit. Forms a multimeric L10(L12)X complex, where L10 forms an elongated spine to which 2 to 4 L12 dimers bind in a sequential fashion. Binds GTP-bound translation factors.

Forms part of the ribosomal stalk which helps the ribosome interact with GTP-bound translation factors. Is thus essential for accurate translation. In Burkholderia mallei (strain NCTC 10247), this protein is Large ribosomal subunit protein bL12.